A 502-amino-acid polypeptide reads, in one-letter code: Probable cytochrome P450 514A4 (502 aa).

The helical transmembrane segment at 4–24 (IFTIILTITILVLSLILKDLL) threads the bilayer. Residue Cys448 coordinates heme.

Belongs to the cytochrome P450 family. Heme is required as a cofactor.

The protein resides in the membrane. This chain is Probable cytochrome P450 514A4 (cyp514A4), found in Dictyostelium discoideum (Social amoeba).